Here is a 340-residue protein sequence, read N- to C-terminus: Glyceraldehyde-3-phosphate dehydrogenase (340 aa).

NAD(+) contacts are provided by residues 11-12 (SI) and Gly111. Position 140 to 142 (140 to 142 (SCN)) interacts with D-glyceraldehyde 3-phosphate. Cys141 serves as the catalytic Nucleophile. NAD(+) is bound at residue Arg169. 195–196 (HG) contacts D-glyceraldehyde 3-phosphate. Residue Gln303 participates in NAD(+) binding.

This sequence belongs to the glyceraldehyde-3-phosphate dehydrogenase family. As to quaternary structure, homotetramer.

It localises to the cytoplasm. The catalysed reaction is D-glyceraldehyde 3-phosphate + phosphate + NADP(+) = (2R)-3-phospho-glyceroyl phosphate + NADPH + H(+). The enzyme catalyses D-glyceraldehyde 3-phosphate + phosphate + NAD(+) = (2R)-3-phospho-glyceroyl phosphate + NADH + H(+). It participates in carbohydrate degradation; glycolysis; pyruvate from D-glyceraldehyde 3-phosphate: step 1/5. The sequence is that of Glyceraldehyde-3-phosphate dehydrogenase from Methanococcus maripaludis (strain C7 / ATCC BAA-1331).